Consider the following 661-residue polypeptide: MGSMERLRQLVDILNEYSYQYYVLDEPVVSDKEYDQLYDELVLLEKELNTVLEDSPTIRVGGDVLKNFKAHNHLAPLWSLDKCKTPEELISWDLRVRRLLEGSGVPIEYVMEYKFDGLTLNLTYNNGQLVQAATRGNGTTGEGILEQVKTIKTIPLTIPHKGRIEVQGEGLMGLSVLAAYNKTALEPLKNPRNAAAGALRNLDPKVTAKRKLSAFCYNVGFYEGIDFNTHMEILAFLKANKFPVSNYTKKFHTIHQVIEEIETIGEQVKSLDFLTDGLVIKVNHMEARRLLGYTQKFPRWAMAFKFEAEEMTTELKDVIWQVGRTGKLTPAAVLEPIDIGGVTVSRATLNNWEDIQRKKVKIGCRVWIRRSNDVIPEIMGSIEETLEGAMDIEKPQHCPACHSEVVERGAHIFCPNSLSCKPQLVSRIVHYASRDAMDIVGFSEKTAEQLFEELNLRDLADLYEIKYEDLIKLPRFGDKKARNLLEAIENSKNCKLDSFVYALGIPNVGRKTATDLAKHYKSFQAIQEAEFQELITLPDVGDIVAQSIIDFFEDEEIKKSVNRLINEGIRPLFKEVEQQENIFLGKTVVVTGTLEKYGRKEIKELLEKLGAKVTGSVSKNTDFLLAGEAAGSKLEKAMEIIASGVETSLRIISEAEFEAML.

NAD(+)-binding positions include aspartate 31–aspartate 35, serine 79–leucine 80, and glutamate 112. The active-site N6-AMP-lysine intermediate is the lysine 114. NAD(+) contacts are provided by arginine 135, glutamate 169, lysine 281, and lysine 305. Positions 398, 401, 414, and 420 each coordinate Zn(2+). The BRCT domain occupies glutamine 578–leucine 661.

The protein belongs to the NAD-dependent DNA ligase family. LigA subfamily. Requires Mg(2+) as cofactor. The cofactor is Mn(2+).

It carries out the reaction NAD(+) + (deoxyribonucleotide)n-3'-hydroxyl + 5'-phospho-(deoxyribonucleotide)m = (deoxyribonucleotide)n+m + AMP + beta-nicotinamide D-nucleotide.. In terms of biological role, DNA ligase that catalyzes the formation of phosphodiester linkages between 5'-phosphoryl and 3'-hydroxyl groups in double-stranded DNA using NAD as a coenzyme and as the energy source for the reaction. It is essential for DNA replication and repair of damaged DNA. The chain is DNA ligase from Alkaliphilus oremlandii (strain OhILAs) (Clostridium oremlandii (strain OhILAs)).